The sequence spans 884 residues: MGRKTLCESETVCRDVTINGSAGCLQNVGPPPTNLFQPPRRPGLGTLGKPIRLLANHFQVQIPKIDVYHYDVDIKPEKRPRRVNREVVDTMVRHFKMPIFGDNQPGYDGKRNMYTAHPLPIGRDRVDLEVTLPGEGKDQTFKVTIQWVSVVSLQLLLEALSGHLSEVPDDSVQALDVITRHLPSMRYTPVGRSFFSPPEGYYHPLGGGREVWFGFHQSVRPAMWNMMLNIDVSATAFYRAQPVIEFMCEVLDVQNINEQTKPLTDSQRVKFTKEIRGLKVEVTHCGQMKRKYRVCNVTRRPASHQTFPLQLENGQAMECTVAQYFKQKYSLQLKYPHLPCLQVGQEQKHTYLPLEVCNIVAGQRCIKKLTDNQTSTMIKATARSAPDRQEEISRLVKSNSMVGGPDPYLKEFGIVVHNEMTELTGRVLPAPMLQYGGRNKTVATPNQGVWDMRGKQFYAGIEIKVWAVACFAPQKQCREDLLKSFTDQLRKISKDAGMPIQGQPCFCKYAQGADSVEPMFKHLKLTYVGLQLIVVILPGKTPVYAEVKRVGDTLLGMATQCVQVKNVVKTSPQTLSNLCLKINAKLGGINNVLVPHQRPSVFQQPVIFLGADVTHPPAGDGKKPSIAAVVGSMDGHPSRYCATVRVQTSRQETTQELLYSQEVIQDLCNMVRELLIQFYKSTRFKPTRIIYYRGGVSEGQMKQVAWPELMAIRKACISLEEDYRPGITYIVVQKRHHTRLFCSDKTERVGKSGNVPAGTTVDSTITHPSEFDFYLCSHAGIQGTSRPSHYQVLWDDNCFTADELQLLTYQLCHTYVRCTRSVSIPAPAYYARLVAFRARYHLVDKDHDSAEGSHVSGQSNGRDPQALAKAVQIHHDTQHSMYFA.

One can recognise a PAZ domain in the interval 242-361; sequence PVIEFMCEVL…LPLEVCNIVA (120 aa). A Piwi domain is found at 532–843; the sequence is LIVVILPGKT…VAFRARYHLV (312 aa). The interval 848 to 870 is disordered; sequence DSAEGSHVSGQSNGRDPQALAKA.

Belongs to the argonaute family. Ago subfamily.

The protein localises to the cytoplasm. It localises to the P-body. Its function is as follows. Required for RNA-mediated gene silencing (RNAi). Binds to short RNAs such as microRNAs (miRNAs) and represses the translation of mRNAs which are complementary to them. Lacks endonuclease activity and does not appear to cleave target mRNAs. The sequence is that of Protein argonaute-4 (ago4) from Xenopus laevis (African clawed frog).